The primary structure comprises 226 residues: Cytidylate kinase (226 aa).

11-19 (GPAAAGKST) contacts ATP.

This sequence belongs to the cytidylate kinase family. Type 1 subfamily.

The protein resides in the cytoplasm. The enzyme catalyses CMP + ATP = CDP + ADP. It carries out the reaction dCMP + ATP = dCDP + ADP. The polypeptide is Cytidylate kinase (Bacillus licheniformis (strain ATCC 14580 / DSM 13 / JCM 2505 / CCUG 7422 / NBRC 12200 / NCIMB 9375 / NCTC 10341 / NRRL NRS-1264 / Gibson 46)).